A 439-amino-acid polypeptide reads, in one-letter code: MSASILLCDGFDVRRILTGKLNGDESSTVTTEEDDEAVFSGEEWCGESSYCFYFVKQFAYDDPEIKAKIDEADHEVYHCNTDRIHIANRLKSKRAARLSLVASMETLMSMKINEVEKEQEVVRGRIYRLGERLSEIKMEIELLDVQMACVLNQRDKAVERIKFLRMQRDKGNAAFYQSRVVMKKAIELAASGNVRDLEELADSEVEKFMSRWNNDKAFRDNYKKRILPSVNERKLRCDVQIRDLEGNLDTENGNETVVKKAIEYKRFSTEEESDDFDIPVYEKLGKEEKEIDEETLKEKKREEQLEKARLAMERKRKLHEKAAAKAVIRVKKEAEKKRKELDKRAKKKKAVCKSSSVDVDRTTETVSEASKPEKEKLLNGRSVFPKQRSYNYRYHGKGNDAVLKAIIKRRKAYRLWVWTVSSAAVALPLALLVVFYYVR.

Residues 286 to 354 (KEEKEIDEET…AKKKKAVCKS (69 aa)) are a coiled coil. A helical membrane pass occupies residues 415–435 (LWVWTVSSAAVALPLALLVVF).

The protein belongs to the plant Proton pump-interactor protein family.

The protein localises to the cell membrane. Its subcellular location is the endoplasmic reticulum membrane. Functionally, may regulate plasma membrane ATPase activity. This is Proton pump-interactor 4 (PPI4) from Arabidopsis thaliana (Mouse-ear cress).